The following is a 470-amino-acid chain: Hydroxymethylglutaryl-CoA synthase (470 aa).

Residue Glu100 is the Proton donor/acceptor of the active site. Cys134 serves as the catalytic Acyl-thioester intermediate. (3S)-3-hydroxy-3-methylglutaryl-CoA is bound by residues Cys134, Thr176, Ser225, His269, Lys278, Asn348, and Ser382. Residue His269 is the Proton donor/acceptor of the active site.

It belongs to the thiolase-like superfamily. HMG-CoA synthase family.

The catalysed reaction is acetoacetyl-CoA + acetyl-CoA + H2O = (3S)-3-hydroxy-3-methylglutaryl-CoA + CoA + H(+). Its pathway is metabolic intermediate biosynthesis; (R)-mevalonate biosynthesis; (R)-mevalonate from acetyl-CoA: step 2/3. Hydroxymethylglutaryl-CoA synthase; part of the first module of ergosterol biosynthesis pathway that includes the early steps of the pathway, conserved across all eukaryotes, and which results in the formation of mevalonate from acetyl-coenzyme A (acetyl-CoA). This module also plays a key role in the biosynthesis of triterpenes such as ganoderic acids (GA), a group of highly oxygenated lanostane-type triterpenoids which are well recognized as a main group of unique bioactive compounds in the medicinal mushroom Ganoderma lucidum. In this module, the acetyl-CoA acetyltransferase catalyzes the formation of acetoacetyl-CoA. The hydroxymethylglutaryl-CoA synthase HMGS then condenses acetyl-CoA with acetoacetyl-CoA to form HMG-CoA. The rate-limiting step of the early module is the reduction to mevalonate by the 3-hydroxy-3-methylglutaryl-coenzyme A (HMG-CoA) reductase. The polypeptide is Hydroxymethylglutaryl-CoA synthase (Ganoderma lucidum (Ling zhi medicinal fungus)).